Reading from the N-terminus, the 552-residue chain is Segmentation polarity homeobox protein engrailed (552 aa).

The span at 93–108 (SGSGSPASCSTPASST) shows a compositional bias: low complexity. 4 disordered regions span residues 93–112 (SGSGSPASCSTPASSTPLTI), 130–171 (THTT…TAKP), 309–419 (PAAP…GGKN), and 433–460 (DRPSSGPRYRRPKQPKDKTNDEKRPRTA). Positions 135–151 (EEEEAEEDDDIDVDVDD) are enriched in acidic residues. Positions 317–382 (PPLSSSASSL…SGSGVNASSP (66 aa)) are enriched in low complexity. A compositionally biased stretch (basic and acidic residues) spans 446 to 457 (QPKDKTNDEKRP). The homeobox DNA-binding region spans 454-513 (EKRPRTAFSSEQLARLKREFNENRYLTERRRQQLSSELGLNEAQIKIWFQNKRAKIKKST).

The protein belongs to the engrailed homeobox family. Post-translationally, phosphorylated. Phosphorylation may directly or allosterically modify its function.

The protein localises to the nucleus. Functionally, this protein specifies the body segmentation pattern. It is required for the development of the central nervous system. Transcriptional regulator that represses activated promoters. Wg signaling operates by inactivating the SGG repression of EN autoactivation. The protein is Segmentation polarity homeobox protein engrailed (en) of Drosophila melanogaster (Fruit fly).